An 857-amino-acid polypeptide reads, in one-letter code: DNA mismatch repair protein MutS (857 aa).

Position 613–620 (613–620) interacts with ATP; the sequence is GPNMGGKS. Residues 797–820 form a disordered region; that stretch reads TSLPHEQPAAHKAKDAPQVPHQSD.

Belongs to the DNA mismatch repair MutS family.

In terms of biological role, this protein is involved in the repair of mismatches in DNA. It is possible that it carries out the mismatch recognition step. This protein has a weak ATPase activity. The chain is DNA mismatch repair protein MutS from Pseudomonas putida (strain ATCC 700007 / DSM 6899 / JCM 31910 / BCRC 17059 / LMG 24140 / F1).